The following is a 241-amino-acid chain: Uracil-DNA glycosylase (241 aa).

Aspartate 68 acts as the Proton acceptor in catalysis.

This sequence belongs to the uracil-DNA glycosylase (UDG) superfamily. UNG family.

The protein localises to the cytoplasm. It catalyses the reaction Hydrolyzes single-stranded DNA or mismatched double-stranded DNA and polynucleotides, releasing free uracil.. In terms of biological role, excises uracil residues from the DNA which can arise as a result of misincorporation of dUMP residues by DNA polymerase or due to deamination of cytosine. The polypeptide is Uracil-DNA glycosylase (Rhizobium meliloti (strain 1021) (Ensifer meliloti)).